The primary structure comprises 203 residues: Urease accessory protein UreG (203 aa).

14–21 lines the GTP pocket; it reads GPVGSGKT.

This sequence belongs to the SIMIBI class G3E GTPase family. UreG subfamily. In terms of assembly, homodimer. UreD, UreF and UreG form a complex that acts as a GTP-hydrolysis-dependent molecular chaperone, activating the urease apoprotein by helping to assemble the nickel containing metallocenter of UreC. The UreE protein probably delivers the nickel.

It localises to the cytoplasm. Functionally, facilitates the functional incorporation of the urease nickel metallocenter. This process requires GTP hydrolysis, probably effectuated by UreG. The sequence is that of Urease accessory protein UreG from Sinorhizobium fredii (strain NBRC 101917 / NGR234).